The primary structure comprises 229 residues: 2-C-methyl-D-erythritol 4-phosphate cytidylyltransferase (229 aa).

The protein belongs to the IspD/TarI cytidylyltransferase family. IspD subfamily.

It carries out the reaction 2-C-methyl-D-erythritol 4-phosphate + CTP + H(+) = 4-CDP-2-C-methyl-D-erythritol + diphosphate. It functions in the pathway isoprenoid biosynthesis; isopentenyl diphosphate biosynthesis via DXP pathway; isopentenyl diphosphate from 1-deoxy-D-xylulose 5-phosphate: step 2/6. Catalyzes the formation of 4-diphosphocytidyl-2-C-methyl-D-erythritol from CTP and 2-C-methyl-D-erythritol 4-phosphate (MEP). In Neisseria meningitidis serogroup C (strain 053442), this protein is 2-C-methyl-D-erythritol 4-phosphate cytidylyltransferase.